Here is a 284-residue protein sequence, read N- to C-terminus: 4-diphosphocytidyl-2-C-methyl-D-erythritol kinase (284 aa).

Lys14 is an active-site residue. 98–108 (PMGGGLGGGSS) serves as a coordination point for ATP. Asp140 is an active-site residue.

Belongs to the GHMP kinase family. IspE subfamily.

The enzyme catalyses 4-CDP-2-C-methyl-D-erythritol + ATP = 4-CDP-2-C-methyl-D-erythritol 2-phosphate + ADP + H(+). Its pathway is isoprenoid biosynthesis; isopentenyl diphosphate biosynthesis via DXP pathway; isopentenyl diphosphate from 1-deoxy-D-xylulose 5-phosphate: step 3/6. Functionally, catalyzes the phosphorylation of the position 2 hydroxy group of 4-diphosphocytidyl-2C-methyl-D-erythritol. The chain is 4-diphosphocytidyl-2-C-methyl-D-erythritol kinase from Shewanella sp. (strain W3-18-1).